Consider the following 177-residue polypeptide: ATP synthase subunit delta (177 aa).

Belongs to the ATPase delta chain family. In terms of assembly, F-type ATPases have 2 components, F(1) - the catalytic core - and F(0) - the membrane proton channel. F(1) has five subunits: alpha(3), beta(3), gamma(1), delta(1), epsilon(1). F(0) has three main subunits: a(1), b(2) and c(10-14). The alpha and beta chains form an alternating ring which encloses part of the gamma chain. F(1) is attached to F(0) by a central stalk formed by the gamma and epsilon chains, while a peripheral stalk is formed by the delta and b chains.

It is found in the cell inner membrane. Functionally, f(1)F(0) ATP synthase produces ATP from ADP in the presence of a proton or sodium gradient. F-type ATPases consist of two structural domains, F(1) containing the extramembraneous catalytic core and F(0) containing the membrane proton channel, linked together by a central stalk and a peripheral stalk. During catalysis, ATP synthesis in the catalytic domain of F(1) is coupled via a rotary mechanism of the central stalk subunits to proton translocation. In terms of biological role, this protein is part of the stalk that links CF(0) to CF(1). It either transmits conformational changes from CF(0) to CF(1) or is implicated in proton conduction. In Flavobacterium psychrophilum (strain ATCC 49511 / DSM 21280 / CIP 103535 / JIP02/86), this protein is ATP synthase subunit delta.